Consider the following 432-residue polypeptide: Adenylosuccinate synthetase (432 aa).

Residues 13 to 19 and 41 to 43 each bind GTP; these read GDEGKGK and GHT. Asp14 serves as the catalytic Proton acceptor. Mg(2+)-binding residues include Asp14 and Gly41. IMP-binding positions include 14–17, 39–42, Thr130, Arg144, Gln225, Thr240, and Arg304; these read DEGK and NAGH. The Proton donor role is filled by His42. 300 to 306 contributes to the substrate binding site; it reads AVTGRPR. GTP is bound by residues Arg306, 332 to 334, and 415 to 417; these read KLD and STG.

Belongs to the adenylosuccinate synthetase family. Homodimer. It depends on Mg(2+) as a cofactor.

It localises to the cytoplasm. It carries out the reaction IMP + L-aspartate + GTP = N(6)-(1,2-dicarboxyethyl)-AMP + GDP + phosphate + 2 H(+). The protein operates within purine metabolism; AMP biosynthesis via de novo pathway; AMP from IMP: step 1/2. In terms of biological role, plays an important role in the de novo pathway of purine nucleotide biosynthesis. Catalyzes the first committed step in the biosynthesis of AMP from IMP. This Actinobacillus pleuropneumoniae serotype 7 (strain AP76) protein is Adenylosuccinate synthetase.